The sequence spans 188 residues: Probable nicotinate-nucleotide adenylyltransferase (188 aa).

Belongs to the NadD family.

It catalyses the reaction nicotinate beta-D-ribonucleotide + ATP + H(+) = deamido-NAD(+) + diphosphate. It functions in the pathway cofactor biosynthesis; NAD(+) biosynthesis; deamido-NAD(+) from nicotinate D-ribonucleotide: step 1/1. Its function is as follows. Catalyzes the reversible adenylation of nicotinate mononucleotide (NaMN) to nicotinic acid adenine dinucleotide (NaAD). The chain is Probable nicotinate-nucleotide adenylyltransferase from Listeria monocytogenes serotype 4a (strain HCC23).